The primary structure comprises 211 residues: Protein-L-isoaspartate O-methyltransferase (211 aa).

The active site involves Ser60.

Belongs to the methyltransferase superfamily. L-isoaspartyl/D-aspartyl protein methyltransferase family.

The protein localises to the cytoplasm. It catalyses the reaction [protein]-L-isoaspartate + S-adenosyl-L-methionine = [protein]-L-isoaspartate alpha-methyl ester + S-adenosyl-L-homocysteine. In terms of biological role, catalyzes the methyl esterification of L-isoaspartyl residues in peptides and proteins that result from spontaneous decomposition of normal L-aspartyl and L-asparaginyl residues. It plays a role in the repair and/or degradation of damaged proteins. The polypeptide is Protein-L-isoaspartate O-methyltransferase (Hahella chejuensis (strain KCTC 2396)).